Here is a 66-residue protein sequence, read N- to C-terminus: Beta-mammal toxin Co2 (66 aa).

The LCN-type CS-alpha/beta domain maps to 1–66 (KEGYIVNYHD…VWPLPKKRCN (66 aa)). Intrachain disulfides connect Cys12/Cys65, Cys16/Cys41, Cys25/Cys46, and Cys29/Cys48.

As to expression, expressed by the venom gland.

The protein localises to the secreted. Beta toxins bind voltage-independently at site-4 of sodium channels (Nav) and shift the voltage of activation toward more negative potentials thereby affecting sodium channel activation and promoting spontaneous and repetitive firing. This toxin acts on human Nav1.1/SCN1A, Nav1.2/SCN2A, Nav1.4/SCN4A and Nav1.6/SCN8A voltage-gated sodium channels. Also, it reduces the peak of sodium currents in Nav1.5/SCN5A at all potentials. In vivo, is lethal to mice when intraperitoneally injected at a dose of 5ug. No activity is observed when injected into crickets or woodlice. This Centruroides ornatus (Scorpion) protein is Beta-mammal toxin Co2.